The primary structure comprises 293 residues: Probable metal transport system membrane protein TC_0698 (293 aa).

The next 7 membrane-spanning stretches (helical) occupy residues 18–38 (SLLA…YIVV), 41–61 (IVSI…IALW), 68–88 (LPIS…ICIG), 101–121 (IISM…SKLP), 142–162 (DLYF…ICHT), 186–206 (FLLL…MGVI), and 242–262 (FLGI…IAIL).

It belongs to the ABC-3 integral membrane protein family.

Its subcellular location is the cell inner membrane. Part of an ATP-driven transport system TC_0696/TC_0697/TC_0698 for a metal. The protein is Probable metal transport system membrane protein TC_0698 of Chlamydia muridarum (strain MoPn / Nigg).